We begin with the raw amino-acid sequence, 227 residues long: PKHD-type hydroxylase Bcen_3557 (227 aa).

Residues 78-178 (KVFPPLFNRY…RVASFFWIQS (101 aa)) form the Fe2OG dioxygenase domain. Positions 96, 98, and 159 each coordinate Fe cation. R169 contacts 2-oxoglutarate.

Fe(2+) is required as a cofactor. The cofactor is L-ascorbate.

The chain is PKHD-type hydroxylase Bcen_3557 from Burkholderia orbicola (strain AU 1054).